The primary structure comprises 425 residues: Serine--tRNA ligase (425 aa).

233 to 235 (TAE) is a binding site for L-serine. Residue 264–266 (RRE) coordinates ATP. E287 is a binding site for L-serine. 351-354 (EVSS) contributes to the ATP binding site. S386 contacts L-serine.

It belongs to the class-II aminoacyl-tRNA synthetase family. Type-1 seryl-tRNA synthetase subfamily. As to quaternary structure, homodimer. The tRNA molecule binds across the dimer.

Its subcellular location is the cytoplasm. It carries out the reaction tRNA(Ser) + L-serine + ATP = L-seryl-tRNA(Ser) + AMP + diphosphate + H(+). The catalysed reaction is tRNA(Sec) + L-serine + ATP = L-seryl-tRNA(Sec) + AMP + diphosphate + H(+). Its pathway is aminoacyl-tRNA biosynthesis; selenocysteinyl-tRNA(Sec) biosynthesis; L-seryl-tRNA(Sec) from L-serine and tRNA(Sec): step 1/1. In terms of biological role, catalyzes the attachment of serine to tRNA(Ser). Is also able to aminoacylate tRNA(Sec) with serine, to form the misacylated tRNA L-seryl-tRNA(Sec), which will be further converted into selenocysteinyl-tRNA(Sec). The polypeptide is Serine--tRNA ligase (Thermosipho melanesiensis (strain DSM 12029 / CIP 104789 / BI429)).